We begin with the raw amino-acid sequence, 230 residues long: Interleukin-6 (230 aa).

An N-terminal signal peptide occupies residues 1 to 24 (MASKHNADLSSAAMLAALLLCALG). Residues cysteine 96 and cysteine 106 are joined by a disulfide bond. Asparagine 100 carries an N-linked (GlcNAc...) asparagine glycan. Basic and acidic residues predominate over residues 206–218 (REMPKQKRRKDDG). The segment at 206 to 230 (REMPKQKRRKDDGIIPPIHPSYQMT) is disordered.

The protein belongs to the IL-6 superfamily. In terms of assembly, component of a hexamer of two molecules each of IL6, IL6R and IL6ST; first binds to IL6R to associate with the signaling subunit IL6ST. As to expression, expressed in kidney and spleen. Low expression in liver and gills.

The protein resides in the secreted. Its function is as follows. Cytokine with a wide variety of biological functions in immunity, tissue regeneration, and metabolism. Binds to IL6R, then the complex associates to the signaling subunit IL6ST/gp130 to trigger the intracellular IL6-signaling pathway. The interaction with the membrane-bound IL6R and IL6ST stimulates 'classic signaling', whereas the binding of IL6 and soluble IL6R to IL6ST stimulates 'trans-signaling'. Alternatively, 'cluster signaling' occurs when membrane-bound IL6:IL6R complexes on transmitter cells activate IL6ST receptors on neighboring receiver cells. This chain is Interleukin-6 (il6), found in Paralichthys olivaceus (Bastard halibut).